The primary structure comprises 419 residues: L-rhamnose isomerase (419 aa).

The Mn(2+) site is built by histidine 262, aspartate 294, and aspartate 296.

Belongs to the rhamnose isomerase family. As to quaternary structure, homotetramer. Mn(2+) serves as cofactor.

It is found in the cytoplasm. The enzyme catalyses L-rhamnopyranose = L-rhamnulose. Its pathway is carbohydrate degradation; L-rhamnose degradation; glycerone phosphate from L-rhamnose: step 1/3. In terms of biological role, catalyzes the interconversion of L-rhamnose and L-rhamnulose. In Klebsiella pneumoniae subsp. pneumoniae (strain ATCC 700721 / MGH 78578), this protein is L-rhamnose isomerase.